We begin with the raw amino-acid sequence, 227 residues long: UPF0173 metal-dependent hydrolase Bsph_4138 (227 aa).

This sequence belongs to the UPF0173 family.

The polypeptide is UPF0173 metal-dependent hydrolase Bsph_4138 (Lysinibacillus sphaericus (strain C3-41)).